Reading from the N-terminus, the 160-residue chain is Large ribosomal subunit protein uL22c (160 aa).

The protein belongs to the universal ribosomal protein uL22 family. As to quaternary structure, part of the 50S ribosomal subunit.

It localises to the plastid. Its subcellular location is the chloroplast. In terms of biological role, this protein binds specifically to 23S rRNA. Its function is as follows. The globular domain of the protein is located near the polypeptide exit tunnel on the outside of the subunit, while an extended beta-hairpin is found that lines the wall of the exit tunnel in the center of the 70S ribosome. This Arabis hirsuta (Hairy rock-cress) protein is Large ribosomal subunit protein uL22c (rpl22).